The sequence spans 404 residues: Cysteine desulfurase IscS (404 aa).

Residues A75 to T76, N155, Q183, and S203 to H205 each bind pyridoxal 5'-phosphate. K206 is modified (N6-(pyridoxal phosphate)lysine). T243 is a binding site for pyridoxal 5'-phosphate. The Cysteine persulfide intermediate role is filled by C328. C328 lines the [2Fe-2S] cluster pocket.

This sequence belongs to the class-V pyridoxal-phosphate-dependent aminotransferase family. NifS/IscS subfamily. Homodimer. Forms a heterotetramer with IscU, interacts with other sulfur acceptors. The cofactor is pyridoxal 5'-phosphate.

The protein localises to the cytoplasm. It catalyses the reaction (sulfur carrier)-H + L-cysteine = (sulfur carrier)-SH + L-alanine. Its pathway is cofactor biosynthesis; iron-sulfur cluster biosynthesis. Its function is as follows. Master enzyme that delivers sulfur to a number of partners involved in Fe-S cluster assembly, tRNA modification or cofactor biosynthesis. Catalyzes the removal of elemental sulfur atoms from cysteine to produce alanine. Functions as a sulfur delivery protein for Fe-S cluster synthesis onto IscU, an Fe-S scaffold assembly protein, as well as other S acceptor proteins. The sequence is that of Cysteine desulfurase IscS from Shewanella sp. (strain ANA-3).